A 196-amino-acid chain; its full sequence is uncharacterized protein (196 aa).

An N-terminal signal peptide occupies residues 1-21 (MNGKQCFCFFLFHLFYTGLFA). Cys22 carries N-palmitoyl cysteine lipidation. Residue Cys22 is the site of S-diacylglycerol cysteine attachment.

Its subcellular location is the cell membrane. This is an uncharacterized protein from Treponema pallidum (strain Nichols).